The following is a 187-amino-acid chain: Elongation factor P (187 aa).

This sequence belongs to the elongation factor P family.

It localises to the cytoplasm. The protein operates within protein biosynthesis; polypeptide chain elongation. In terms of biological role, involved in peptide bond synthesis. Stimulates efficient translation and peptide-bond synthesis on native or reconstituted 70S ribosomes in vitro. Probably functions indirectly by altering the affinity of the ribosome for aminoacyl-tRNA, thus increasing their reactivity as acceptors for peptidyl transferase. This Corynebacterium efficiens (strain DSM 44549 / YS-314 / AJ 12310 / JCM 11189 / NBRC 100395) protein is Elongation factor P.